Here is a 79-residue protein sequence, read N- to C-terminus: MSDVAERVKKIVIEHLGVDADKVVDNANFIEDLGADSLDTVELVMAFEEEFSVEIPDDAAETIVTVGDAVNFLEKATAA.

The 76-residue stretch at 2-77 (SDVAERVKKI…DAVNFLEKAT (76 aa)) folds into the Carrier domain. An O-(pantetheine 4'-phosphoryl)serine modification is found at S37.

Belongs to the acyl carrier protein (ACP) family. In terms of processing, 4'-phosphopantetheine is transferred from CoA to a specific serine of apo-ACP by AcpS. This modification is essential for activity because fatty acids are bound in thioester linkage to the sulfhydryl of the prosthetic group.

The protein localises to the cytoplasm. Its pathway is lipid metabolism; fatty acid biosynthesis. Its function is as follows. Carrier of the growing fatty acid chain in fatty acid biosynthesis. The polypeptide is Acyl carrier protein (Methylocella silvestris (strain DSM 15510 / CIP 108128 / LMG 27833 / NCIMB 13906 / BL2)).